Consider the following 527-residue polypeptide: Protein Lilipod (527 aa).

The Extracellular portion of the chain corresponds to 1 to 22 (MDEEEEEEVTDLKLQLFHNTVR). A helical membrane pass occupies residues 23-43 (EHIIFLLLIILLYSSSYVVVS). At 44–65 (RFRRRDRDDLYSNDEDEVLVYR) the chain is on the cytoplasmic side. Residues 66–86 (ISFWLCTFTLAVAEGAAMLLP) traverse the membrane as a helical segment. The Extracellular portion of the chain corresponds to 87 to 117 (VSIASNEVLLLYPNSYYVKWLNSSLIQGLWN). The chain crosses the membrane as a helical span at residues 118-138 (HVFLFSNLSLFIFLPFVYLFS). The Cytoplasmic segment spans residues 139–160 (ESTGFVGNKKGILPRVYETFTV). The helical transmembrane segment at 161 to 181 (FMLMAIIVLVLTAVLSAVFGI) threads the bilayer. Over 182–194 (EKLQFFWFLNLGS) the chain is Extracellular. A helical transmembrane segment spans residues 195-215 (VHLPFLYSCVSFLGVMLMLIC). The Cytoplasmic segment spans residues 216–341 (TPYGFVRLFG…LRTSSTFQRT (126 aa)). A helical membrane pass occupies residues 342–362 (FVYPLAMLLLLFCTAVTILLV). The Extracellular portion of the chain corresponds to 363-395 (VQNTLELLIGIKALPLSTRQFALGISSLSKLGP). A helical membrane pass occupies residues 396–416 (FGAGLEVCLIFYLGATSVVGF). The Cytoplasmic segment spans residues 417 to 433 (YSMPFMRKVCPKRRQTS). Residues 434–454 (LPQLMLNCGFMLVLSSALPLL) form a helical membrane-spanning segment. Over 455–468 (SRIIGITNFDLLGD) the chain is Extracellular. Residues 469-489 (FGAIEWLGNFQIVLLYNLVFG) traverse the membrane as a helical segment. The Cytoplasmic segment spans residues 490–527 (TTTALCLANKFTATVRRELRARLVENYVLFTNYISFIN).

It belongs to the LIMR family. In the ovary, detected in germline stem cells and their progeny. Also detected in the somatic follicular epithelium.

It localises to the cell membrane. In terms of biological role, required during oogenesis to promote self-renewal of germline stem cells, probably by enhancing BMP signaling activity. The protein is Protein Lilipod of Drosophila melanogaster (Fruit fly).